A 238-amino-acid polypeptide reads, in one-letter code: Sugar fermentation stimulation protein homolog (238 aa).

It belongs to the SfsA family.

The protein is Sugar fermentation stimulation protein homolog of Bartonella tribocorum (strain CIP 105476 / IBS 506).